Reading from the N-terminus, the 741-residue chain is Isocitrate dehydrogenase [NADP] (741 aa).

NADP(+) is bound by residues asparagine 85 and serine 87. Serine 132, asparagine 135, arginine 139, arginine 145, and lysine 255 together coordinate D-threo-isocitrate. Asparagine 135 provides a ligand contact to NADP(+). Aspartate 350 provides a ligand contact to Mn(2+). The D-threo-isocitrate site is built by tyrosine 420 and arginine 547. Aspartate 548 is a binding site for Mn(2+). 5 residues coordinate NADP(+): serine 585, histidine 589, arginine 600, aspartate 602, and arginine 649.

It belongs to the monomeric-type IDH family. In terms of assembly, monomer. Mg(2+) is required as a cofactor. Mn(2+) serves as cofactor.

The protein resides in the cytoplasm. The catalysed reaction is D-threo-isocitrate + NADP(+) = 2-oxoglutarate + CO2 + NADPH. Its activity is regulated as follows. Activity is inhibited in the presence of Ca(2+). Functionally, catalyzes the oxidative decarboxylation of isocitrate to 2-oxoglutarate and carbon dioxide with the concomitant reduction of NADP(+). In Azotobacter vinelandii, this protein is Isocitrate dehydrogenase [NADP].